Consider the following 511-residue polypeptide: Histidine ammonia-lyase (511 aa).

The 5-imidazolinone (Ala-Gly) cross-link spans 142 to 144; it reads ASG. 2,3-didehydroalanine (Ser) is present on S143.

This sequence belongs to the PAL/histidase family. Post-translationally, contains an active site 4-methylidene-imidazol-5-one (MIO), which is formed autocatalytically by cyclization and dehydration of residues Ala-Ser-Gly.

It is found in the cytoplasm. The catalysed reaction is L-histidine = trans-urocanate + NH4(+). It functions in the pathway amino-acid degradation; L-histidine degradation into L-glutamate; N-formimidoyl-L-glutamate from L-histidine: step 1/3. The protein is Histidine ammonia-lyase of Brucella abortus (strain S19).